Reading from the N-terminus, the 309-residue chain is Tagatose-6-phosphate kinase (309 aa).

It belongs to the carbohydrate kinase PfkB family. LacC subfamily.

The enzyme catalyses D-tagatofuranose 6-phosphate + ATP = D-tagatofuranose 1,6-bisphosphate + ADP + H(+). It functions in the pathway carbohydrate metabolism; D-tagatose 6-phosphate degradation; D-glyceraldehyde 3-phosphate and glycerone phosphate from D-tagatose 6-phosphate: step 1/2. This chain is Tagatose-6-phosphate kinase, found in Streptococcus pyogenes serotype M5 (strain Manfredo).